The following is a 316-amino-acid chain: ATP synthase gamma chain (316 aa).

The protein belongs to the ATPase gamma chain family. In terms of assembly, F-type ATPases have 2 components, CF(1) - the catalytic core - and CF(0) - the membrane proton channel. CF(1) has five subunits: alpha(3), beta(3), gamma(1), delta(1), epsilon(1). CF(0) has three main subunits: a, b and c.

The protein resides in the cellular thylakoid membrane. In terms of biological role, produces ATP from ADP in the presence of a proton gradient across the membrane. The gamma chain is believed to be important in regulating ATPase activity and the flow of protons through the CF(0) complex. The polypeptide is ATP synthase gamma chain (Prochlorococcus marinus (strain SARG / CCMP1375 / SS120)).